The following is a 285-amino-acid chain: 2-methoxy-6-polyprenyl-1,4-benzoquinol methylase, mitochondrial (285 aa).

Residues 1–30 (MKGATNLFKSMRKPTNVGNFRQFSVNQVNS) constitute a mitochondrion transit peptide. S-adenosyl-L-methionine-binding positions include threonine 106, aspartate 126, 156–157 (NA), and serine 173.

This sequence belongs to the class I-like SAM-binding methyltransferase superfamily. MenG/UbiE family. Component of a multi-subunit COQ enzyme complex.

It is found in the mitochondrion inner membrane. It carries out the reaction a 2-methoxy-6-(all-trans-polyprenyl)benzene-1,4-diol + S-adenosyl-L-methionine = a 5-methoxy-2-methyl-3-(all-trans-polyprenyl)benzene-1,4-diol + S-adenosyl-L-homocysteine + H(+). It functions in the pathway cofactor biosynthesis; ubiquinone biosynthesis. Methyltransferase required for the conversion of 2-polyprenyl-6-methoxy-1,4-benzoquinol (DDMQH2) to 2-polyprenyl-3-methyl-6-methoxy-1,4-benzoquinol (DMQH2). In Caenorhabditis elegans, this protein is 2-methoxy-6-polyprenyl-1,4-benzoquinol methylase, mitochondrial.